We begin with the raw amino-acid sequence, 135 residues long: Large ribosomal subunit protein uL16c (135 aa).

It belongs to the universal ribosomal protein uL16 family. Part of the 50S ribosomal subunit.

It localises to the plastid. The protein resides in the chloroplast. In Daucus carota (Wild carrot), this protein is Large ribosomal subunit protein uL16c.